The chain runs to 569 residues: Acyl-CoA transferase FVEG_12629 (569 aa).

Belongs to the CoA-transferase III family.

Functionally, acyl-CoA transferase; part of the Fusarium detoxification of benzoxazolinone cluster 2 (FDB2) involved in the degradation of benzoxazolinones produced by the host plant. Maize, wheat, and rye produce the 2 benzoxazinone phytoanticipins 2,4-dihy-droxy-7-methoxy-1,4-benzoxazin-3-one (DIMBOA) and 2,4-dihydroxy-1,4-benzoxazin-3-one (DIBOA) that, due to their inherent instability once released, spontaneously degrade to the more stable corresponding benzoxazolinones, 6-methoxy-2-benzoxazolinone (MBOA) and 2-benzoxazolinone (BOA), respectively. The first step in the detoxification of benzoxazolinones involves the hydrolysis of the cyclic ester bond of benzoxazolinones by the FDB1 cluster gamma-lactamase MBL1 to aminophenols. MBL1 is able to convert BOA into 2-aminophenol (2-AP), as well as MBOA into 5-methoxy-2-aminophenol (2-AMP). The FDB2 cluster N-malonyltransferase FDB2/NAT1 then metabolizes aminophenols via N-malonylation to non-toxic malonamic acids. FDB2/NAT1 converts 2-AP into N-(2-hydroxyphenyl) malonamic acid (HPMA) and 2-AMP into N-(2-hydroxy-4-methoxyphenyl) malonamic acid (HMPMA). The duplicated dienlactone hydrolases DLH1 and DLH2 may provide redundant function for hydrolyzing the lactone moiety in the BOA molecule. The roles of the amidases an other enzymes encoded by the 2 FDB clusters have not been identified so far. The protein is Acyl-CoA transferase FVEG_12629 of Gibberella moniliformis (strain M3125 / FGSC 7600) (Maize ear and stalk rot fungus).